The following is a 137-amino-acid chain: ATP synthase epsilon chain (137 aa).

This sequence belongs to the ATPase epsilon chain family. As to quaternary structure, F-type ATPases have 2 components, CF(1) - the catalytic core - and CF(0) - the membrane proton channel. CF(1) has five subunits: alpha(3), beta(3), gamma(1), delta(1), epsilon(1). CF(0) has three main subunits: a, b and c.

It localises to the cell membrane. Functionally, produces ATP from ADP in the presence of a proton gradient across the membrane. This Streptococcus agalactiae serotype Ia (strain ATCC 27591 / A909 / CDC SS700) protein is ATP synthase epsilon chain.